The following is a 198-amino-acid chain: Glycerol-3-phosphate acyltransferase (198 aa).

A run of 4 helical transmembrane segments spans residues 3-23 (VEWL…AVIV), 81-101 (LFAA…FFQF), 113-133 (VLLG…IGVA), and 153-175 (YVWL…MLLV).

The protein belongs to the PlsY family. In terms of assembly, probably interacts with PlsX.

It localises to the cell inner membrane. It carries out the reaction an acyl phosphate + sn-glycerol 3-phosphate = a 1-acyl-sn-glycero-3-phosphate + phosphate. It functions in the pathway lipid metabolism; phospholipid metabolism. In terms of biological role, catalyzes the transfer of an acyl group from acyl-phosphate (acyl-PO(4)) to glycerol-3-phosphate (G3P) to form lysophosphatidic acid (LPA). This enzyme utilizes acyl-phosphate as fatty acyl donor, but not acyl-CoA or acyl-ACP. This Methylococcus capsulatus (strain ATCC 33009 / NCIMB 11132 / Bath) protein is Glycerol-3-phosphate acyltransferase.